Consider the following 335-residue polypeptide: MDFREVIEQRYHQLLSRYIAELTETSLYQAQKFSRKTIEHQIPPEEIISIHRKVLKELYPSLPEDVFHSLDFLIEVMIGYGMAYQEHQTLRGIQQEIKSEIEIAANVQQTLLGTKVPQEEALDIGAISVPAKQMSGDYYHFVKDKESINIAIADVIGKGIPAALCMSMIKYAMDSLPETGIHPSQVLKNLNRVVEQNVDASMFITMFYANYNMDKHQFTYASAGHEPGFYYSQKDNTFYDLEAKGLVLGISQDYDYKQFDQHLEKGDMIVLFSDGVTECRTENGFLERPDLQKLIEEHMCSSAQEMVKNIYDSLLKLQDFQLHDDFTLIVLRRKV.

In terms of domain architecture, PPM-type phosphatase spans 123-333 (DIGAISVPAK…DDFTLIVLRR (211 aa)).

The enzyme catalyses O-phospho-L-serine + H2O = L-serine + phosphate. The catalysed reaction is O-phospho-D-serine + H2O = D-serine + phosphate. Its activity is regulated as follows. Stimulated by a long-lived interaction with RsbT. In terms of biological role, positive regulator of sigma-B activity. Dephosphorylates RsbV in response to environmental stress conveyed from the RsbXST module. This is Phosphoserine phosphatase RsbU (rsbU) from Bacillus subtilis (strain 168).